The chain runs to 88 residues: Small ribosomal subunit protein uS15c (88 aa).

Belongs to the universal ribosomal protein uS15 family. In terms of assembly, part of the 30S ribosomal subunit.

The protein localises to the plastid. It localises to the chloroplast. This Arabidopsis thaliana (Mouse-ear cress) protein is Small ribosomal subunit protein uS15c (rps15).